A 224-amino-acid chain; its full sequence is 3-dehydroquinate dehydratase (224 aa).

Residues 35–37 and Arg-65 contribute to the 3-dehydroquinate site; that span reads EFR. His-120 functions as the Proton donor/acceptor in the catalytic mechanism. The active-site Schiff-base intermediate with substrate is the Lys-146. Residues Arg-183, Thr-202, and Gln-206 each contribute to the 3-dehydroquinate site.

This sequence belongs to the type-I 3-dehydroquinase family. Homodimer.

The enzyme catalyses 3-dehydroquinate = 3-dehydroshikimate + H2O. It participates in metabolic intermediate biosynthesis; chorismate biosynthesis; chorismate from D-erythrose 4-phosphate and phosphoenolpyruvate: step 3/7. In terms of biological role, involved in the third step of the chorismate pathway, which leads to the biosynthesis of aromatic amino acids. Catalyzes the cis-dehydration of 3-dehydroquinate (DHQ) and introduces the first double bond of the aromatic ring to yield 3-dehydroshikimate. The polypeptide is 3-dehydroquinate dehydratase (Methanobrevibacter smithii (strain ATCC 35061 / DSM 861 / OCM 144 / PS)).